The primary structure comprises 36 residues: Pancreatic polypeptide (36 aa).

Tyrosine 36 bears the Tyrosine amide mark.

This sequence belongs to the NPY family.

The protein localises to the secreted. Functionally, hormone secreted by pancreatic cells that acts as a regulator of pancreatic and gastrointestinal functions probably by signaling through the G protein-coupled receptor NPY4R2. The chain is Pancreatic polypeptide (PPY) from Oryctolagus cuniculus (Rabbit).